A 211-amino-acid chain; its full sequence is MERELRLGIMGGTFDPIHYGHLVTAEAVRSEFKLDKVIFVPAGNPPHKVKRKVTDKKHRYLMTILATITNPFFEVSTIEIDREGYTYTIDTIKEFKKIYGEKTQLYFITGADAVLEILTWKSADELLKMCNFVAATRPGVEGNRIDEELNKIRKLYGNVIYKVTVPSLAISSTDIRERVAGGRPIKYLLPESVERYIQKYDLYKKDEENGV.

Belongs to the NadD family.

The enzyme catalyses nicotinate beta-D-ribonucleotide + ATP + H(+) = deamido-NAD(+) + diphosphate. It participates in cofactor biosynthesis; NAD(+) biosynthesis; deamido-NAD(+) from nicotinate D-ribonucleotide: step 1/1. Catalyzes the reversible adenylation of nicotinate mononucleotide (NaMN) to nicotinic acid adenine dinucleotide (NaAD). The sequence is that of Probable nicotinate-nucleotide adenylyltransferase from Thermoanaerobacter sp. (strain X514).